A 144-amino-acid polypeptide reads, in one-letter code: D-aminoacyl-tRNA deacylase (144 aa).

The Gly-cisPro motif, important for rejection of L-amino acids motif lies at 136-137 (GP).

It belongs to the DTD family. As to quaternary structure, homodimer.

The protein localises to the cytoplasm. It carries out the reaction glycyl-tRNA(Ala) + H2O = tRNA(Ala) + glycine + H(+). The catalysed reaction is a D-aminoacyl-tRNA + H2O = a tRNA + a D-alpha-amino acid + H(+). In terms of biological role, an aminoacyl-tRNA editing enzyme that deacylates mischarged D-aminoacyl-tRNAs. Also deacylates mischarged glycyl-tRNA(Ala), protecting cells against glycine mischarging by AlaRS. Acts via tRNA-based rather than protein-based catalysis; rejects L-amino acids rather than detecting D-amino acids in the active site. By recycling D-aminoacyl-tRNA to D-amino acids and free tRNA molecules, this enzyme counteracts the toxicity associated with the formation of D-aminoacyl-tRNA entities in vivo and helps enforce protein L-homochirality. This Glaesserella parasuis serovar 5 (strain SH0165) (Haemophilus parasuis) protein is D-aminoacyl-tRNA deacylase.